The following is a 318-amino-acid chain: Beta-ketoacyl-[acyl-carrier-protein] synthase III (318 aa).

Catalysis depends on residues Cys-112 and His-245. Positions 246-250 (QANIR) are ACP-binding. Asn-275 is a catalytic residue.

Belongs to the thiolase-like superfamily. FabH family. Homodimer.

It localises to the cytoplasm. It catalyses the reaction malonyl-[ACP] + acetyl-CoA + H(+) = 3-oxobutanoyl-[ACP] + CO2 + CoA. The protein operates within lipid metabolism; fatty acid biosynthesis. In terms of biological role, catalyzes the condensation reaction of fatty acid synthesis by the addition to an acyl acceptor of two carbons from malonyl-ACP. Catalyzes the first condensation reaction which initiates fatty acid synthesis and may therefore play a role in governing the total rate of fatty acid production. Possesses both acetoacetyl-ACP synthase and acetyl transacylase activities. Its substrate specificity determines the biosynthesis of branched-chain and/or straight-chain of fatty acids. The chain is Beta-ketoacyl-[acyl-carrier-protein] synthase III from Rickettsia conorii (strain ATCC VR-613 / Malish 7).